Here is a 274-residue protein sequence, read N- to C-terminus: tRNA pseudouridine synthase A (274 aa).

Aspartate 54 functions as the Nucleophile in the catalytic mechanism. Tyrosine 112 serves as a coordination point for substrate.

The protein belongs to the tRNA pseudouridine synthase TruA family. As to quaternary structure, homodimer.

It catalyses the reaction uridine(38/39/40) in tRNA = pseudouridine(38/39/40) in tRNA. In terms of biological role, formation of pseudouridine at positions 38, 39 and 40 in the anticodon stem and loop of transfer RNAs. The chain is tRNA pseudouridine synthase A from Solidesulfovibrio magneticus (strain ATCC 700980 / DSM 13731 / RS-1) (Desulfovibrio magneticus).